The following is a 276-amino-acid chain: uncharacterized protein (276 aa).

Positions 20–137 (PVLIFIPGAN…PPINTFLPDS (118 aa)) constitute an AB hydrolase-1 domain. The segment at 57-76 (GESELTEPLPDSASNPDSDY) is disordered.

The protein belongs to the AB hydrolase superfamily.

This is an uncharacterized protein from Staphylococcus aureus (strain bovine RF122 / ET3-1).